Here is a 228-residue protein sequence, read N- to C-terminus: PKHD-type hydroxylase YbiX (228 aa).

Residues 78–177 (TLSTPLFNRY…RVASFIWIQS (100 aa)) form the Fe2OG dioxygenase domain. The Fe cation site is built by histidine 96, aspartate 98, and histidine 158. Arginine 168 contacts 2-oxoglutarate.

The cofactor is Fe(2+). Requires L-ascorbate as cofactor.

This chain is PKHD-type hydroxylase YbiX, found in Escherichia coli O157:H7.